The chain runs to 95 residues: Small ribosomal subunit protein bS6 (95 aa).

The protein belongs to the bacterial ribosomal protein bS6 family.

Functionally, binds together with bS18 to 16S ribosomal RNA. The protein is Small ribosomal subunit protein bS6 of Clostridium beijerinckii (strain ATCC 51743 / NCIMB 8052) (Clostridium acetobutylicum).